Reading from the N-terminus, the 94-residue chain is Small ribosomal subunit protein uS19 (94 aa).

Belongs to the universal ribosomal protein uS19 family.

Protein S19 forms a complex with S13 that binds strongly to the 16S ribosomal RNA. The polypeptide is Small ribosomal subunit protein uS19 (Moorella thermoacetica (strain ATCC 39073 / JCM 9320)).